The primary structure comprises 128 residues: Aspartate 1-decarboxylase (128 aa).

Residue Ser25 is the Schiff-base intermediate with substrate; via pyruvic acid of the active site. Position 25 is a pyruvic acid (Ser) (Ser25). Thr57 is a binding site for substrate. Tyr58 acts as the Proton donor in catalysis. 73 to 75 (GSA) contacts substrate.

This sequence belongs to the PanD family. As to quaternary structure, heterooctamer of four alpha and four beta subunits. The cofactor is pyruvate. Is synthesized initially as an inactive proenzyme, which is activated by self-cleavage at a specific serine bond to produce a beta-subunit with a hydroxyl group at its C-terminus and an alpha-subunit with a pyruvoyl group at its N-terminus.

Its subcellular location is the cytoplasm. It carries out the reaction L-aspartate + H(+) = beta-alanine + CO2. Its pathway is cofactor biosynthesis; (R)-pantothenate biosynthesis; beta-alanine from L-aspartate: step 1/1. Functionally, catalyzes the pyruvoyl-dependent decarboxylation of aspartate to produce beta-alanine. This is Aspartate 1-decarboxylase from Burkholderia thailandensis (strain ATCC 700388 / DSM 13276 / CCUG 48851 / CIP 106301 / E264).